The following is a 291-amino-acid chain: 4-diphosphocytidyl-2-C-methyl-D-erythritol kinase (291 aa).

Lys-11 is a catalytic residue. ATP is bound at residue 97–107; that stretch reads PVAAGIGGGSS. Residue Asp-139 is part of the active site.

The protein belongs to the GHMP kinase family. IspE subfamily.

It catalyses the reaction 4-CDP-2-C-methyl-D-erythritol + ATP = 4-CDP-2-C-methyl-D-erythritol 2-phosphate + ADP + H(+). It functions in the pathway isoprenoid biosynthesis; isopentenyl diphosphate biosynthesis via DXP pathway; isopentenyl diphosphate from 1-deoxy-D-xylulose 5-phosphate: step 3/6. In terms of biological role, catalyzes the phosphorylation of the position 2 hydroxy group of 4-diphosphocytidyl-2C-methyl-D-erythritol. The protein is 4-diphosphocytidyl-2-C-methyl-D-erythritol kinase of Methylorubrum extorquens (strain CM4 / NCIMB 13688) (Methylobacterium extorquens).